A 233-amino-acid chain; its full sequence is UPF0502 protein YpsIP31758_2048 (233 aa).

The protein belongs to the UPF0502 family.

This is UPF0502 protein YpsIP31758_2048 from Yersinia pseudotuberculosis serotype O:1b (strain IP 31758).